The chain runs to 333 residues: Protein amalgam (333 aa).

The N-terminal stretch at 1–23 is a signal peptide; the sequence is MARLRLLIGLIFCLAISLDSVLS. The 104-residue stretch at 25-128 folds into the Ig-like V-type domain; the sequence is PVISQISKDV…VLVSATEKVT (104 aa). N-linked (GlcNAc...) asparagine glycosylation is found at asparagine 45 and asparagine 86. 3 disulfides stabilise this stretch: cysteine 46-cysteine 117, cysteine 161-cysteine 208, and cysteine 251-cysteine 307. Ig-like C2-type domains follow at residues 139–223 and 230–323; these read PVIA…RLIR and PQIA…LHLF. The N-linked (GlcNAc...) asparagine glycan is linked to asparagine 308.

Its subcellular location is the cell membrane. This Drosophila melanogaster (Fruit fly) protein is Protein amalgam (Ama).